Reading from the N-terminus, the 244-residue chain is Cell division protein ZapD (244 aa).

It belongs to the ZapD family. In terms of assembly, interacts with FtsZ.

The protein resides in the cytoplasm. Cell division factor that enhances FtsZ-ring assembly. Directly interacts with FtsZ and promotes bundling of FtsZ protofilaments, with a reduction in FtsZ GTPase activity. The chain is Cell division protein ZapD from Shewanella sp. (strain MR-4).